The chain runs to 224 residues: Phosphoglycolate phosphatase (224 aa).

Aspartate 11 (nucleophile) is an active-site residue. Mg(2+) is bound by residues aspartate 11, aspartate 13, and aspartate 177.

It belongs to the HAD-like hydrolase superfamily. CbbY/CbbZ/Gph/YieH family. Requires Mg(2+) as cofactor.

The catalysed reaction is 2-phosphoglycolate + H2O = glycolate + phosphate. It participates in organic acid metabolism; glycolate biosynthesis; glycolate from 2-phosphoglycolate: step 1/1. Its function is as follows. Specifically catalyzes the dephosphorylation of 2-phosphoglycolate. Is involved in the dissimilation of the intracellular 2-phosphoglycolate formed during the DNA repair of 3'-phosphoglycolate ends, a major class of DNA lesions induced by oxidative stress. This chain is Phosphoglycolate phosphatase, found in Mannheimia succiniciproducens (strain KCTC 0769BP / MBEL55E).